A 1025-amino-acid polypeptide reads, in one-letter code: Beta-galactosidase (1025 aa).

Substrate contacts are provided by Asn103 and Asp202. Asp202 is a Na(+) binding site. Mg(2+) is bound by residues Glu417, His419, and Glu462. Residues Glu462 and 538-541 (EYAH) contribute to the substrate site. Glu462 functions as the Proton donor in the catalytic mechanism. The active-site Nucleophile is the Glu538. Position 598 (Asn598) interacts with Mg(2+). Residues Phe602 and Asn605 each contribute to the Na(+) site. Asn605 and Trp1003 together coordinate substrate.

It belongs to the glycosyl hydrolase 2 family. In terms of assembly, homotetramer. It depends on Mg(2+) as a cofactor. The cofactor is Na(+).

It carries out the reaction Hydrolysis of terminal non-reducing beta-D-galactose residues in beta-D-galactosides.. The protein is Beta-galactosidase of Citrobacter koseri (strain ATCC BAA-895 / CDC 4225-83 / SGSC4696).